The following is a 119-amino-acid chain: Promotilin (119 aa).

An N-terminal signal peptide occupies residues 1–25 (MVSRKAVVVLLVVHAAAMLASHTEA). The interval 40-72 (EKERNKGQKKSLSVQQASEELGPLDPSEPTKEE) is disordered.

The protein belongs to the motilin family.

Its subcellular location is the secreted. In terms of biological role, plays an important role in the regulation of interdigestive gastrointestinal motility and indirectly causes rhythmic contraction of duodenal and colonic smooth muscle. This Sus scrofa (Pig) protein is Promotilin (MLN).